Consider the following 576-residue polypeptide: CDPK-related kinase 1 (576 aa).

The tract at residues 1–39 is disordered; it reads MGICHGKPVEQQSKSLPVSGETNEAPTNSQPPAKSSGFP. The N-myristoyl glycine moiety is linked to residue Gly-2. The segment covering 10–33 has biased composition (polar residues); it reads EQQSKSLPVSGETNEAPTNSQPPA. The Protein kinase domain maps to 123–385; that stretch reads YEIDGEVGRG…AAQALCHPWL (263 aa). Residues 129–137 and Lys-155 contribute to the ATP site; that span reads VGRGHFGYT. The active-site Proton acceptor is the Asp-251. Ser-291 is modified (phosphoserine). At Ser-333 the chain carries Phosphoserine; by CPK1 and CPK34. Residues 390-420 form an autoinhibitory domain region; it reads ELKIPSDMIIYKLVKVYIMSTSLRKSALAAL. Residues 409–429 form a calmodulin binding (CaMBD) region; it reads STSLRKSALAALAKTLTVPQL. 4 consecutive EF-hand domains span residues 427–463, 464–499, 500–539, and 542–571; these read PQLA…STDA, MKDS…VYQL, EAME…GPSV, and HVVL…VSSR. Residues Ser-442, Asn-444, Tyr-446, Lys-483, Glu-488, Asp-519, Asn-521, Glu-528, Asp-553, and Lys-555 each coordinate Ca(2+). The residue at position 557 (Ser-557) is a Phosphoserine.

This sequence belongs to the protein kinase superfamily. Ser/Thr protein kinase family. CDPK subfamily. In terms of assembly, binds calmodulin (CaM) in a calcium-dependent manner. Interacts with HSFA1A. Autophosphorylated.

It localises to the membrane. It carries out the reaction L-seryl-[protein] + ATP = O-phospho-L-seryl-[protein] + ADP + H(+). It catalyses the reaction L-threonyl-[protein] + ATP = O-phospho-L-threonyl-[protein] + ADP + H(+). Its activity is regulated as follows. Activated by calcium and calmodulin. Autophosphorylation may play an important role in the regulation of the kinase activity. Its function is as follows. May play a role in signal transduction pathways that involve calcium as a second messenger. Serine/threonine kinase that phosphorylates histone H3. Confers thermotolerance; involved in the heat-shock-mediated calmodulin-dependent signal transduction leading to the activation of heat-shock transcription factors (HSFs); phosphorylates HSFA1A. The protein is CDPK-related kinase 1 (CRK1) of Arabidopsis thaliana (Mouse-ear cress).